Consider the following 101-residue polypeptide: Protein RnfH (101 aa).

The protein belongs to the UPF0125 (RnfH) family.

This chain is Protein RnfH, found in Pseudomonas aeruginosa (strain UCBPP-PA14).